A 1139-amino-acid polypeptide reads, in one-letter code: Protein lin-25 (1139 aa).

The Nuclear localization signal signature appears at 695-701 (IKKKKDP).

In terms of tissue distribution, expressed in seam cells and all six vulva precursor cells (VPC). After VPC division, expression is restricted to descendants of the VPC cell lineages P5.p, P6.p and P7.p (at protein level).

Its subcellular location is the nucleus. It localises to the cytoplasm. Participates in the inductive signaling pathway downstream of let-60 Ras and the RAF/MAP kinase cascade to regulate specification and differentiation of many cell types. Positively regulates the fate of vulval precursor cells. Required for induction of the P12 and excretory duct cell fates. In males, it is also required for proper formation of spicules. Does not function in the signaling pathway that promotes exit from pachytene. Plays a role in responses to M.nematophilum-mediated bacterial infection by promoting tail swelling and preventing constipation. The protein is Protein lin-25 (lin-25) of Caenorhabditis elegans.